We begin with the raw amino-acid sequence, 72 residues long: Prokaryotic ubiquitin-like protein Pup (72 aa).

A compositionally biased stretch (gly residues) spans 1–11 (MAQRDTGGGQQ). Residues 1-41 (MAQRDTGGGQQRTGRRDDETAEAEVEESGASDLKERHEKLS) are disordered. The span at 19–29 (ETAEAEVEESG) shows a compositional bias: acidic residues. A coiled-coil region spans residues 22 to 61 (EAEVEESGASDLKERHEKLSEDVDSLLDEIDDVLEENAEE). The ARC ATPase binding stretch occupies residues 28 to 66 (SGASDLKERHEKLSEDVDSLLDEIDDVLEENAEEFVKGY). Residues 32–41 (DLKERHEKLS) show a composition bias toward basic and acidic residues. Gln72 carries the deamidated glutamine modification. Residue Gln72 forms an Isoglutamyl lysine isopeptide (Gln-Lys) (interchain with K-? in acceptor proteins) linkage.

The protein belongs to the prokaryotic ubiquitin-like protein family. In terms of assembly, strongly interacts with the proteasome-associated ATPase ARC through a hydrophobic interface; the interacting region of Pup lies in its C-terminal half. There is one Pup binding site per ARC hexamer ring. Is modified by deamidation of its C-terminal glutamine to glutamate by the deamidase Dop, a prerequisite to the subsequent pupylation process.

It participates in protein degradation; proteasomal Pup-dependent pathway. In terms of biological role, protein modifier that is covalently attached to lysine residues of substrate proteins, thereby targeting them for proteasomal degradation. The tagging system is termed pupylation. The sequence is that of Prokaryotic ubiquitin-like protein Pup from Parafrankia sp. (strain EAN1pec).